Reading from the N-terminus, the 278-residue chain is Shikimate dehydrogenase (NADP(+)) (278 aa).

Shikimate-binding positions include 19-21 and Thr66; that span reads SLS. The Proton acceptor role is filled by Lys70. Asn91 and Asp106 together coordinate shikimate. Residues 130 to 134, 152 to 157, and Leu222 each bind NADP(+); these read GAGGS and NRTVEK. Tyr224 provides a ligand contact to shikimate. Gly245 is a binding site for NADP(+).

Belongs to the shikimate dehydrogenase family. In terms of assembly, homodimer.

It carries out the reaction shikimate + NADP(+) = 3-dehydroshikimate + NADPH + H(+). Its pathway is metabolic intermediate biosynthesis; chorismate biosynthesis; chorismate from D-erythrose 4-phosphate and phosphoenolpyruvate: step 4/7. In terms of biological role, involved in the biosynthesis of the chorismate, which leads to the biosynthesis of aromatic amino acids. Catalyzes the reversible NADPH linked reduction of 3-dehydroshikimate (DHSA) to yield shikimate (SA). The sequence is that of Shikimate dehydrogenase (NADP(+)) from Methanococcus aeolicus (strain ATCC BAA-1280 / DSM 17508 / OCM 812 / Nankai-3).